The sequence spans 189 residues: Protein GrpE (189 aa).

Positions 1–10 are enriched in polar residues; that stretch reads MADEQQQTLD. The tract at residues 1 to 21 is disordered; sequence MADEQQQTLDPQAPEQTDAPE.

It belongs to the GrpE family. In terms of assembly, homodimer.

Its subcellular location is the cytoplasm. Functionally, participates actively in the response to hyperosmotic and heat shock by preventing the aggregation of stress-denatured proteins, in association with DnaK and GrpE. It is the nucleotide exchange factor for DnaK and may function as a thermosensor. Unfolded proteins bind initially to DnaJ; upon interaction with the DnaJ-bound protein, DnaK hydrolyzes its bound ATP, resulting in the formation of a stable complex. GrpE releases ADP from DnaK; ATP binding to DnaK triggers the release of the substrate protein, thus completing the reaction cycle. Several rounds of ATP-dependent interactions between DnaJ, DnaK and GrpE are required for fully efficient folding. This Pseudomonas paraeruginosa (strain DSM 24068 / PA7) (Pseudomonas aeruginosa (strain PA7)) protein is Protein GrpE.